The primary structure comprises 147 residues: Lipoprotein YafY (147 aa).

Residues 1–20 form the signal peptide; the sequence is MKRKTLPLLALVATTLFLIA. C21 carries the N-palmitoyl cysteine lipid modification. C21 is lipidated: S-diacylglycerol cysteine.

It to E.coli YfjS.

It localises to the cell inner membrane. In terms of biological role, when overproduced strongly induces degP through the activation of the two-component envelope stress response system CpxA/CpxR. This is Lipoprotein YafY (yafY) from Escherichia coli (strain K12).